The sequence spans 196 residues: Beta-crystallin A4 (196 aa).

An N-acetylthreonine modification is found at Thr-2. The interval 2-11 is N-terminal arm; it reads TLQCTKSAGP. Beta/gamma crystallin 'Greek key' domains lie at 12-51 and 52-98; these read WKMV…KVLS and GAWV…RPAA. The connecting peptide stretch occupies residues 99–104; the sequence is CANHRD. 2 consecutive Beta/gamma crystallin 'Greek key' domains span residues 105–146 and 147–195; these read SRLT…HVHS and GAWV…RRIQ.

The protein belongs to the beta/gamma-crystallin family. As to quaternary structure, homo/heterodimer, or complexes of higher-order. The structure of beta-crystallin oligomers seems to be stabilized through interactions between the N-terminal arms.

Functionally, crystallins are the dominant structural components of the vertebrate eye lens. This is Beta-crystallin A4 (CRYBA4) from Homo sapiens (Human).